Reading from the N-terminus, the 240-residue chain is 1-(5-phosphoribosyl)-5-[(5-phosphoribosylamino)methylideneamino] imidazole-4-carboxamide isomerase (240 aa).

D9 acts as the Proton acceptor in catalysis. The Proton donor role is filled by D131.

Belongs to the HisA/HisF family.

The protein localises to the cytoplasm. The catalysed reaction is 1-(5-phospho-beta-D-ribosyl)-5-[(5-phospho-beta-D-ribosylamino)methylideneamino]imidazole-4-carboxamide = 5-[(5-phospho-1-deoxy-D-ribulos-1-ylimino)methylamino]-1-(5-phospho-beta-D-ribosyl)imidazole-4-carboxamide. Its pathway is amino-acid biosynthesis; L-histidine biosynthesis; L-histidine from 5-phospho-alpha-D-ribose 1-diphosphate: step 4/9. In Cytophaga hutchinsonii (strain ATCC 33406 / DSM 1761 / CIP 103989 / NBRC 15051 / NCIMB 9469 / D465), this protein is 1-(5-phosphoribosyl)-5-[(5-phosphoribosylamino)methylideneamino] imidazole-4-carboxamide isomerase.